A 179-amino-acid polypeptide reads, in one-letter code: Natural killer cells antigen CD94 (179 aa).

Residues 1 to 10 are Cytoplasmic-facing; that stretch reads MAVSRITRWR. Residues 11–31 form a helical; Signal-anchor for type II membrane protein membrane-spanning segment; sequence LMSVIFGIKCLFLMVTLGVLL. Residues 32-179 lie on the Extracellular side of the membrane; that stretch reads INSFTIQNIQ…NRYICKKLPI (148 aa). Intrachain disulfides connect Cys-58–Cys-70, Cys-61–Cys-72, Cys-89–Cys-174, and Cys-152–Cys-166. Residues 68–175 form the C-type lectin domain; it reads HQCNCYFISK…CENKNRYICK (108 aa). Asn-93 and Asn-109 each carry an N-linked (GlcNAc...) asparagine glycan.

Can form disulfide-bonded heterodimer with NKG2 family members KLRC1 and KLRC2. KLRD1-KLRC1 heterodimer interacts with peptide-bound MHC-E-B2M heterotrimeric complex. KLRD1 plays a prominent role in directly interacting with MHC-E. KLRD1-KLRC1 interacts with much higher affinity with peptide-bound MHC-E-B2M than KLRD1-KLRC2. Interacts with the adapter protein TYROBP/DAP12; this interaction is required for cell surface expression and cell activation.

It is found in the cell membrane. In terms of biological role, immune receptor involved in self-nonself discrimination. In complex with KLRC1 or KLRC2 on cytotoxic and regulatory lymphocyte subsets, recognizes non-classical major histocompatibility (MHC) class Ib molecule MHC-E loaded with self-peptides derived from the signal sequence of classical MHC class Ia and non-classical MHC class Ib molecules. Enables cytotoxic cells to monitor the expression of MHC class I molecules in healthy cells and to tolerate self. Primarily functions as a ligand binding subunit as it lacks the capacity to signal. Its function is as follows. KLRD1-KLRC1 acts as an immune inhibitory receptor. Key inhibitory receptor on natural killer (NK) cells that regulates their activation and effector functions. Dominantly counteracts T cell receptor signaling on a subset of memory/effector CD8-positive T cells as part of an antigen-driven response to avoid autoimmunity. On intraepithelial CD8-positive gamma-delta regulatory T cells triggers TGFB1 secretion, which in turn limits the cytotoxic programming of intraepithelial CD8-positive alpha-beta T cells, distinguishing harmless from pathogenic antigens. In MHC-E-rich tumor microenvironment, acts as an immune inhibitory checkpoint and may contribute to progressive loss of effector functions of NK cells and tumor-specific T cells, a state known as cell exhaustion. Upon MHC-E-peptide binding, transmits intracellular signals through KLRC1 immunoreceptor tyrosine-based inhibition motifs (ITIMs) by recruiting INPP5D/SHIP-1 and INPPL1/SHIP-2 tyrosine phosphatases to ITIMs, and ultimately opposing signals transmitted by activating receptors through dephosphorylation of proximal signaling molecules. Functionally, KLRD1-KLRC2 acts as an immune activating receptor. On cytotoxic lymphocyte subsets recognizes MHC-E loaded with signal sequence-derived peptides from non-classical MHC class Ib MHC-G molecules, likely playing a role in the generation and effector functions of adaptive NK cells and in maternal-fetal tolerance during pregnancy. Regulates the effector functions of terminally differentiated cytotoxic lymphocyte subsets, and in particular may play a role in adaptive NK cell response to viral infection. Upon MHC-E-peptide binding, transmits intracellular signals via the adapter protein TYROBP/DAP12, triggering the phosphorylation of proximal signaling molecules and cell activation. This is Natural killer cells antigen CD94 (Klrd1) from Mus musculus (Mouse).